Consider the following 263-residue polypeptide: Chymotrypsinogen B (263 aa).

Positions 1–18 are cleaved as a signal peptide; that stretch reads MASLWLLSCFSLVGAAFG. Cystine bridges form between Cys-19–Cys-140, Cys-60–Cys-76, Cys-154–Cys-219, Cys-186–Cys-200, and Cys-209–Cys-238. Positions 34–261 constitute a Peptidase S1 domain; that stretch reads IVNGEDAVPG…LIPWVQKILA (228 aa). His-75 (charge relay system) is an active-site residue. At Ser-93 the chain carries Phosphoserine. Asp-120 acts as the Charge relay system in catalysis. Residue Ser-213 is the Charge relay system of the active site.

It belongs to the peptidase S1 family.

It is found in the secreted. Its subcellular location is the extracellular space. The enzyme catalyses Preferential cleavage: Tyr-|-Xaa, Trp-|-Xaa, Phe-|-Xaa, Leu-|-Xaa.. This Homo sapiens (Human) protein is Chymotrypsinogen B.